Here is a 317-residue protein sequence, read N- to C-terminus: HTH-type transcriptional regulator MetR (317 aa).

Residues 1–59 (MIEVKHLKTLQALRNCGSLAAAAATLHQTQSALSHQFSDLEQRLGFRLFVRKSQPLRFT) enclose the HTH lysR-type domain. The H-T-H motif DNA-binding region spans 19–38 (LAAAAATLHQTQSALSHQFS).

It belongs to the LysR transcriptional regulatory family.

Its subcellular location is the cytoplasm. Its function is as follows. Control of the last step in methionine biosynthesis; MetR is a positive activator of the metA, metE and metH genes. It is also a negative regulator of its own expression. The chain is HTH-type transcriptional regulator MetR (metR) from Escherichia coli O157:H7.